A 296-amino-acid polypeptide reads, in one-letter code: Bifunctional protein FolD (296 aa).

Residues 169–171 (GRG), T196, and V237 each bind NADP(+).

The protein belongs to the tetrahydrofolate dehydrogenase/cyclohydrolase family. Homodimer.

It carries out the reaction (6R)-5,10-methylene-5,6,7,8-tetrahydrofolate + NADP(+) = (6R)-5,10-methenyltetrahydrofolate + NADPH. It catalyses the reaction (6R)-5,10-methenyltetrahydrofolate + H2O = (6R)-10-formyltetrahydrofolate + H(+). Its pathway is one-carbon metabolism; tetrahydrofolate interconversion. In terms of biological role, catalyzes the oxidation of 5,10-methylenetetrahydrofolate to 5,10-methenyltetrahydrofolate and then the hydrolysis of 5,10-methenyltetrahydrofolate to 10-formyltetrahydrofolate. The protein is Bifunctional protein FolD of Kocuria rhizophila (strain ATCC 9341 / DSM 348 / NBRC 103217 / DC2201).